We begin with the raw amino-acid sequence, 431 residues long: Putative serine/threonine-protein kinase A (431 aa).

A Protein kinase domain is found at 20–279 (YLNKGIVGLG…VREIFQIPYI (260 aa)). Residues 26–34 (VGLGSYGEA) and lysine 49 contribute to the ATP site. Aspartate 147 serves as the catalytic Proton acceptor. The 99-residue stretch at 331 to 429 (DVTHRGHVNK…WVHAIQRGIG (99 aa)) folds into the PH domain.

This sequence belongs to the protein kinase superfamily. Ser/Thr protein kinase family.

It catalyses the reaction L-seryl-[protein] + ATP = O-phospho-L-seryl-[protein] + ADP + H(+). The catalysed reaction is L-threonyl-[protein] + ATP = O-phospho-L-threonyl-[protein] + ADP + H(+). This is Putative serine/threonine-protein kinase A (NRKA) from Trypanosoma brucei brucei.